Reading from the N-terminus, the 471-residue chain is Trigger factor (471 aa).

A PPIase FKBP-type domain is found at Gly-169–Pro-264.

It belongs to the FKBP-type PPIase family. Tig subfamily.

It localises to the cytoplasm. It catalyses the reaction [protein]-peptidylproline (omega=180) = [protein]-peptidylproline (omega=0). Involved in protein export. Acts as a chaperone by maintaining the newly synthesized protein in an open conformation. Functions as a peptidyl-prolyl cis-trans isomerase. The polypeptide is Trigger factor (Nostoc sp. (strain PCC 7120 / SAG 25.82 / UTEX 2576)).